The primary structure comprises 448 residues: Tubulin beta chain (448 aa).

Positions 11, 69, 138, 142, 143, 144, 204, and 226 each coordinate GTP. A Mg(2+)-binding site is contributed by glutamate 69.

It belongs to the tubulin family. As to quaternary structure, dimer of alpha and beta chains. A typical microtubule is a hollow water-filled tube with an outer diameter of 25 nm and an inner diameter of 15 nM. Alpha-beta heterodimers associate head-to-tail to form protofilaments running lengthwise along the microtubule wall with the beta-tubulin subunit facing the microtubule plus end conferring a structural polarity. Microtubules usually have 13 protofilaments but different protofilament numbers can be found in some organisms and specialized cells. It depends on Mg(2+) as a cofactor.

Its subcellular location is the cytoplasm. It localises to the cytoskeleton. Its function is as follows. Tubulin is the major constituent of microtubules, a cylinder consisting of laterally associated linear protofilaments composed of alpha- and beta-tubulin heterodimers. Microtubules grow by the addition of GTP-tubulin dimers to the microtubule end, where a stabilizing cap forms. Below the cap, tubulin dimers are in GDP-bound state, owing to GTPase activity of alpha-tubulin. The sequence is that of Tubulin beta chain (TUB1) from Melampsora lini (Rust fungus).